Here is a 203-residue protein sequence, read N- to C-terminus: ATP-dependent Clp protease proteolytic subunit 2 (203 aa).

Ser98 serves as the catalytic Nucleophile. His123 is an active-site residue.

Belongs to the peptidase S14 family. In terms of assembly, fourteen ClpP subunits assemble into 2 heptameric rings which stack back to back to give a disk-like structure with a central cavity, resembling the structure of eukaryotic proteasomes.

The protein resides in the cytoplasm. The enzyme catalyses Hydrolysis of proteins to small peptides in the presence of ATP and magnesium. alpha-casein is the usual test substrate. In the absence of ATP, only oligopeptides shorter than five residues are hydrolyzed (such as succinyl-Leu-Tyr-|-NHMec, and Leu-Tyr-Leu-|-Tyr-Trp, in which cleavage of the -Tyr-|-Leu- and -Tyr-|-Trp bonds also occurs).. Functionally, cleaves peptides in various proteins in a process that requires ATP hydrolysis. Has a chymotrypsin-like activity. Plays a major role in the degradation of misfolded proteins. The polypeptide is ATP-dependent Clp protease proteolytic subunit 2 (Chlamydia pneumoniae (Chlamydophila pneumoniae)).